The primary structure comprises 238 residues: uncharacterized protein (238 aa).

Residues methionine 1–lysine 68 enclose the HTH gntR-type domain. The H-T-H motif DNA-binding region spans glutamate 28 to aspartate 47.

This is an uncharacterized protein from Escherichia coli (strain K12).